A 61-amino-acid polypeptide reads, in one-letter code: Peroxidase 1 (61 aa).

Residues 1–32 are disordered; that stretch reads DNTAKEKDSPANLSLRTCAAGDNAEQPLDPSR. A glycan (N-linked (GlcNAc...) asparagine) is linked at Asn12. 3 residues coordinate Ca(2+): Asp29, Ser31, and Asp36.

Belongs to the peroxidase family. Classical plant (class III) peroxidase subfamily. The cofactor is Ca(2+). Requires heme b as cofactor.

Its subcellular location is the secreted. It catalyses the reaction 2 a phenolic donor + H2O2 = 2 a phenolic radical donor + 2 H2O. Its function is as follows. Removal of H(2)O(2), oxidation of toxic reductants, biosynthesis and degradation of lignin, suberization, auxin catabolism, response to environmental stresses such as wounding, pathogen attack and oxidative stress. These functions might be dependent on each isozyme/isoform in each plant tissue. This is Peroxidase 1 from Vitis rotundifolia (Muscadine grape).